A 261-amino-acid polypeptide reads, in one-letter code: Orotidine 5'-phosphate decarboxylase (261 aa).

Residues Asp-34, 56–58, 88–97, Tyr-214, and Arg-232 each bind substrate; these read KTH and DRKFADIGNT. The active-site Proton donor is the Lys-90.

Belongs to the OMP decarboxylase family.

It catalyses the reaction orotidine 5'-phosphate + H(+) = UMP + CO2. Its pathway is pyrimidine metabolism; UMP biosynthesis via de novo pathway; UMP from orotate: step 2/2. The polypeptide is Orotidine 5'-phosphate decarboxylase (URA3) (Kodamaea ohmeri (Yeast)).